Reading from the N-terminus, the 500-residue chain is L-arabinose isomerase (500 aa).

Positions 306, 333, 350, and 450 each coordinate Mn(2+).

The protein belongs to the arabinose isomerase family. As to quaternary structure, homohexamer. Requires Mn(2+) as cofactor.

It carries out the reaction beta-L-arabinopyranose = L-ribulose. It participates in carbohydrate degradation; L-arabinose degradation via L-ribulose; D-xylulose 5-phosphate from L-arabinose (bacterial route): step 1/3. Catalyzes the conversion of L-arabinose to L-ribulose. This chain is L-arabinose isomerase, found in Salmonella typhi.